The primary structure comprises 660 residues: Bifunctional polymyxin resistance protein ArnA (660 aa).

Positions 1–304 are formyltransferase ArnAFT; that stretch reads MKAVIFAYHD…TLGLVAGARL (304 aa). The active-site Proton donor; for formyltransferase activity is the H104. (6R)-10-formyltetrahydrofolate-binding positions include R114 and 136–140; that span reads VKRAD. Residues 314–660 form a dehydrogenase ArnADH region; it reads RRIRVLILGV…RSVDIAERAS (347 aa). NAD(+)-binding positions include D347 and 368-369; that span reads DI. UDP-alpha-D-glucuronate contacts are provided by residues A393, Y398, and 432–433; that span reads TS. The active-site Proton acceptor; for decarboxylase activity is the E434. UDP-alpha-D-glucuronate is bound by residues R460, N492, 526–535, and Y613; that span reads KLIDGGQQKR. Residue R619 is the Proton donor; for decarboxylase activity of the active site.

This sequence in the N-terminal section; belongs to the Fmt family. UDP-L-Ara4N formyltransferase subfamily. In the C-terminal section; belongs to the NAD(P)-dependent epimerase/dehydratase family. UDP-glucuronic acid decarboxylase subfamily. Homohexamer, formed by a dimer of trimers.

The catalysed reaction is UDP-alpha-D-glucuronate + NAD(+) = UDP-beta-L-threo-pentopyranos-4-ulose + CO2 + NADH. It catalyses the reaction UDP-4-amino-4-deoxy-beta-L-arabinose + (6R)-10-formyltetrahydrofolate = UDP-4-deoxy-4-formamido-beta-L-arabinose + (6S)-5,6,7,8-tetrahydrofolate + H(+). The protein operates within nucleotide-sugar biosynthesis; UDP-4-deoxy-4-formamido-beta-L-arabinose biosynthesis; UDP-4-deoxy-4-formamido-beta-L-arabinose from UDP-alpha-D-glucuronate: step 1/3. It functions in the pathway nucleotide-sugar biosynthesis; UDP-4-deoxy-4-formamido-beta-L-arabinose biosynthesis; UDP-4-deoxy-4-formamido-beta-L-arabinose from UDP-alpha-D-glucuronate: step 3/3. It participates in bacterial outer membrane biogenesis; lipopolysaccharide biosynthesis. Functionally, bifunctional enzyme that catalyzes the oxidative decarboxylation of UDP-glucuronic acid (UDP-GlcUA) to UDP-4-keto-arabinose (UDP-Ara4O) and the addition of a formyl group to UDP-4-amino-4-deoxy-L-arabinose (UDP-L-Ara4N) to form UDP-L-4-formamido-arabinose (UDP-L-Ara4FN). The modified arabinose is attached to lipid A and is required for resistance to polymyxin and cationic antimicrobial peptides. The chain is Bifunctional polymyxin resistance protein ArnA from Salmonella schwarzengrund (strain CVM19633).